Here is a 124-residue protein sequence, read N- to C-terminus: MFLLSLLHFFHPSLIPSLSLSHTHSSSLPPYRLHCTALSYRDLLTKKSANFRSPIYRSHVNEKGTLTHSFRPTKDMQSGNCWFTILRKARNLLNHGILLSSNNRSFCFIIQISKINPFERFLEM.

Positions 1–21 are cleaved as a signal peptide; that stretch reads MFLLSLLHFFHPSLIPSLSLS.

This is an uncharacterized protein from Schizosaccharomyces pombe (strain 972 / ATCC 24843) (Fission yeast).